Reading from the N-terminus, the 68-residue chain is Potassium channel toxin epsilon-KTx 1.2 (68 aa).

The N-terminal stretch at 1-26 (MKFSCGFLLIFLVLSAMIATFSEVEA) is a signal peptide. 4 disulfide bridges follow: Cys-30-Cys-38, Cys-33-Cys-54, Cys-37-Cys-47, and Cys-42-Cys-52. A Tyrosine amide modification is found at Tyr-55. Residues 57-68 (RSDLNEEFENYQ) constitute a propeptide that is removed on maturation.

It belongs to the short scorpion toxin superfamily. Potassium channel inhibitor family. Epsilon-KTx 01 subfamily. In terms of tissue distribution, expressed by the venom gland.

The protein resides in the secreted. Its function is as follows. Potassium channel blocker. At 3 uM, this toxin blocks voltage-gated potassium channels rKv1.2/KCNA2 (5%), hKv1.3/KCNA3 (10%),rKv1.4/KCNA4 (20%), Kv11/hERG (24%), and Shaker-IR (27%). This Tityus serrulatus (Brazilian scorpion) protein is Potassium channel toxin epsilon-KTx 1.2.